Here is a 413-residue protein sequence, read N- to C-terminus: MSDFIFTSESVTEGHPDKICDQISDAVLDALLTEDPESRVACETVVNTGLCLLTGEITSKAKVDYIKLVRNVIKEIGYEGYRAGGFDANSCAVLVALDEQSPDISQGVNEADDVNDDLEDNTGAGDQGIMFGYACDETPELMPLPISLAHRLAIQLSKVRHENMLNYLLPDGKTQVSIDYKNGVPLSINTILISTQHNPEIDGITNEEEIRQRIKEDLWKNVVLPATEDLEIKPNIQTTRFLVNPTGKFVVGGPQGDAGLTGRKIIVDTYGGYARHGGGAFSGKDPTKVDRSAAYAARYVAKSIVKAKLAKKAEVQLSYAIGVAKPISILVETFDTGVISQANLTELINKYFDLRPAAIIKEFDLRNLPQKMGGTFFRKTASYGHFGRRDLDLPWEKVEEKAAQLAEASKVFL.

His15 provides a ligand contact to ATP. Mg(2+) is bound at residue Asp17. Glu43 serves as a coordination point for K(+). The L-methionine site is built by Glu56 and Gln100. Positions Gln100 to Glu110 are flexible loop. Residues Asp171–Lys173, Lys248–Phe249, Asp257, Arg263–Lys264, Ala280, and Lys284 contribute to the ATP site. L-methionine is bound at residue Asp257. Residue Lys288 participates in L-methionine binding.

It belongs to the AdoMet synthase family. Homotetramer; dimer of dimers. Mg(2+) is required as a cofactor. K(+) serves as cofactor.

Its subcellular location is the cytoplasm. The enzyme catalyses L-methionine + ATP + H2O = S-adenosyl-L-methionine + phosphate + diphosphate. It participates in amino-acid biosynthesis; S-adenosyl-L-methionine biosynthesis; S-adenosyl-L-methionine from L-methionine: step 1/1. In terms of biological role, catalyzes the formation of S-adenosylmethionine (AdoMet) from methionine and ATP. The overall synthetic reaction is composed of two sequential steps, AdoMet formation and the subsequent tripolyphosphate hydrolysis which occurs prior to release of AdoMet from the enzyme. The chain is S-adenosylmethionine synthase from Prochlorococcus marinus (strain AS9601).